Here is a 493-residue protein sequence, read N- to C-terminus: Lysine--tRNA ligase (493 aa).

Mg(2+) contacts are provided by E404 and E411.

This sequence belongs to the class-II aminoacyl-tRNA synthetase family. In terms of assembly, homodimer. Mg(2+) is required as a cofactor.

The protein localises to the cytoplasm. It catalyses the reaction tRNA(Lys) + L-lysine + ATP = L-lysyl-tRNA(Lys) + AMP + diphosphate. The protein is Lysine--tRNA ligase of Oceanobacillus iheyensis (strain DSM 14371 / CIP 107618 / JCM 11309 / KCTC 3954 / HTE831).